The following is a 383-amino-acid chain: tRNA-specific 2-thiouridylase MnmA (383 aa).

ATP is bound by residues 30-37 (GMSGGVDS) and M56. The interaction with target base in tRNA stretch occupies residues 116–118 (NPD). C121 acts as the Nucleophile in catalysis. C121 and C218 are joined by a disulfide. G146 lines the ATP pocket. The tract at residues 168–170 (KDQ) is interaction with tRNA. C218 functions as the Cysteine persulfide intermediate in the catalytic mechanism. An interaction with tRNA region spans residues 330-331 (RY).

The protein belongs to the MnmA/TRMU family.

Its subcellular location is the cytoplasm. The enzyme catalyses S-sulfanyl-L-cysteinyl-[protein] + uridine(34) in tRNA + AH2 + ATP = 2-thiouridine(34) in tRNA + L-cysteinyl-[protein] + A + AMP + diphosphate + H(+). Catalyzes the 2-thiolation of uridine at the wobble position (U34) of tRNA, leading to the formation of s(2)U34. This Haemophilus influenzae (strain 86-028NP) protein is tRNA-specific 2-thiouridylase MnmA.